The chain runs to 356 residues: D-alanine--D-alanine ligase (356 aa).

The ATP-grasp domain maps to 134–339; that stretch reads KQLFEHRGLP…YPELITKLIE (206 aa). 167-222 is an ATP binding site; sequence NDKLNYPVFVKPANLGSSVGISKCNNEAELKEGIKEAFQFDRKLVIEQGVNAREIE. Asp-293, Glu-306, and Asn-308 together coordinate Mg(2+).

The protein belongs to the D-alanine--D-alanine ligase family. The cofactor is Mg(2+). Requires Mn(2+) as cofactor.

It is found in the cytoplasm. It carries out the reaction 2 D-alanine + ATP = D-alanyl-D-alanine + ADP + phosphate + H(+). It participates in cell wall biogenesis; peptidoglycan biosynthesis. Its function is as follows. Cell wall formation. The sequence is that of D-alanine--D-alanine ligase from Staphylococcus aureus (strain MSSA476).